The primary structure comprises 718 residues: Kinesin-like protein KIF2C (718 aa).

Residues 1–248 (MESLPARLFP…CHPLTLTDPT (248 aa)) are globular. Phosphoserine is present on residues Ser-3 and Ser-19. A disordered region spans residues 86 to 111 (PKQKRRSVNSKIPAPKEGLRSRSTRM). Ser-92 carries the post-translational modification Phosphoserine; by AURKB. A Microtubule tip localization signal motif is present at residues 95-98 (SKIP). Phosphoserine is present on residues Ser-106, Ser-108, Ser-112, Ser-163, and Ser-186. A negative regulator of microtubule-binding region spans residues 201-232 (EKRAQNSEIRIKRAQEYDSSFPNWEFARMIKE). The Kinesin motor domain occupies 252–582 (RICVCVRKRP…LRYADRVKEL (331 aa)). Residues Arg-258 and 342–349 (GQTGSGKT) contribute to the ATP site. Positions 409-412 (KKAK) match the Nuclear localization signal motif. A phosphoserine mark is found at Ser-513 and Ser-626. Coiled-coil stretches lie at residues 613–651 (NFKEEEELSSQMSSFNEAMSQIRELEERAMEELREIIQQ) and 689–716 (ALREVIKALRVAMQLEEQASKQMNSKKR).

The protein belongs to the TRAFAC class myosin-kinesin ATPase superfamily. Kinesin family. MCAK/KIF2 subfamily. As to quaternary structure, interacts with CENPH. Interacts with MTUS2/TIP150; the interaction is direct. Interacts with MAPRE1; the interaction is direct, regulated by phosphorylation and is probably required for targeting to growing microtubule plus ends. Interacts with KIF18B at microtubule tips; this interaction increases the affinity of both partners for microtubule plus ends and is required for robust microtubule depolymerization. Phosphorylation by AURKA or AURKB strongly reduces KIF18B-binding. Phosphorylation by AURKB, regulates association with centromeres and kinetochores and the microtubule depolymerization activity. Post-translationally, ubiquitinated.

It localises to the cytoplasm. Its subcellular location is the cytoskeleton. The protein localises to the nucleus. The protein resides in the chromosome. It is found in the centromere. It localises to the kinetochore. Functionally, in complex with KIF18B, constitutes the major microtubule plus-end depolymerizing activity in mitotic cells. Regulates the turnover of microtubules at the kinetochore and functions in chromosome segregation during mitosis. Plays a role in chromosome congression and is required for the lateral to end-on conversion of the chromosome-microtubule attachment. The sequence is that of Kinesin-like protein KIF2C (KIF2C) from Cricetulus griseus (Chinese hamster).